A 232-amino-acid chain; its full sequence is Orotidine 5'-phosphate decarboxylase (232 aa).

Residues D14, K36, 63–72 (DLKFHDIPNT), T122, R183, Q192, G212, and R213 contribute to the substrate site. K65 serves as the catalytic Proton donor.

It belongs to the OMP decarboxylase family. Type 1 subfamily. In terms of assembly, homodimer.

The enzyme catalyses orotidine 5'-phosphate + H(+) = UMP + CO2. It participates in pyrimidine metabolism; UMP biosynthesis via de novo pathway; UMP from orotate: step 2/2. Functionally, catalyzes the decarboxylation of orotidine 5'-monophosphate (OMP) to uridine 5'-monophosphate (UMP). The chain is Orotidine 5'-phosphate decarboxylase from Psychrobacter arcticus (strain DSM 17307 / VKM B-2377 / 273-4).